Consider the following 108-residue polypeptide: MGNICCVKCEMCHQKYSRKKIHSKKICYKCLLVPVNQINNSPSNNSIHKMNYKKNHEMNHEANHVSHIINTNDTDWYVQRNKRKYHPNPSDSRYGSRCFSAGLPVGFG.

Gly2 carries the N-myristoyl glycine; by host lipid modification.

This is an uncharacterized protein from Acanthamoeba polyphaga (Amoeba).